Consider the following 43-residue polypeptide: Potassium channel toxin gamma-KTx 4.11 (43 aa).

4 cysteine pairs are disulfide-bonded: cysteine 5–cysteine 23, cysteine 11–cysteine 34, cysteine 20–cysteine 39, and cysteine 24–cysteine 41.

Belongs to the ergtoxin family. Gamma-KTx 4 subfamily. Expressed by the venom gland.

It localises to the secreted. Its function is as follows. Reversibly blocks Kv11/ERG potassium channels. The polypeptide is Potassium channel toxin gamma-KTx 4.11 (Centruroides noxius (Mexican scorpion)).